Reading from the N-terminus, the 296-residue chain is Protoheme IX farnesyltransferase (296 aa).

At 1-9 (MMFKQYLQV) the chain is on the cytoplasmic side. A helical membrane pass occupies residues 10 to 28 (TKPGIIFGNLISVIGGFLL). Residues 29–37 (ASKGSIDYP) lie on the Periplasmic side of the membrane. A helical membrane pass occupies residues 38-56 (LFIYTLVGVSLVVASGCVF). The Cytoplasmic segment spans residues 57–78 (NNYIDRDIDRKMERTKNRVLVK). A helical membrane pass occupies residues 79–97 (GLISPGVSLVYATLLGIAG). At 98–107 (FMLLWFGANP) the chain is on the periplasmic side. A helical membrane pass occupies residues 108 to 126 (LACWLGVMGFVVYVGVYSL). Over 127-197 (YMKRHSVYGT…YQAANIPVLP (71 aa)) the chain is Cytoplasmic. The chain crosses the membrane as a helical span at residues 198 to 216 (VVKGISVAKNHITLYIIAF). The Periplasmic portion of the chain corresponds to 217–228 (AVATLMLTLGGY). The chain crosses the membrane as a helical span at residues 229 to 247 (AGYKYLVVAAAVSVWWLGM). Over 248–268 (ALRGYKVEDDKVWARKLFGFS) the chain is Cytoplasmic. A helical transmembrane segment spans residues 269 to 287 (IIAITALSIMMSVDFMVPN). Residues 288-296 (SQNLLTYVW) lie on the Periplasmic side of the membrane.

Belongs to the UbiA prenyltransferase family. Protoheme IX farnesyltransferase subfamily.

It is found in the cell inner membrane. The enzyme catalyses heme b + (2E,6E)-farnesyl diphosphate + H2O = Fe(II)-heme o + diphosphate. The protein operates within porphyrin-containing compound metabolism; heme O biosynthesis; heme O from protoheme: step 1/1. Converts heme B (protoheme IX) to heme O by substitution of the vinyl group on carbon 2 of heme B porphyrin ring with a hydroxyethyl farnesyl side group. The protein is Protoheme IX farnesyltransferase of Salmonella typhimurium (strain LT2 / SGSC1412 / ATCC 700720).